The following is a 625-amino-acid chain: tRNA uridine 5-carboxymethylaminomethyl modification enzyme MnmG (625 aa).

FAD contacts are provided by residues 9-14 (GGGHAG), Val-121, and Ser-176. Residue 270-284 (GPRYCPSIEDKIYRF) coordinates NAD(+). Gln-367 is an FAD binding site.

Belongs to the MnmG family. Homodimer. Heterotetramer of two MnmE and two MnmG subunits. It depends on FAD as a cofactor.

It localises to the cytoplasm. Functionally, NAD-binding protein involved in the addition of a carboxymethylaminomethyl (cmnm) group at the wobble position (U34) of certain tRNAs, forming tRNA-cmnm(5)s(2)U34. This is tRNA uridine 5-carboxymethylaminomethyl modification enzyme MnmG from Nitratiruptor sp. (strain SB155-2).